The sequence spans 104 residues: Small ribosomal subunit protein bS18c (104 aa).

The protein belongs to the bacterial ribosomal protein bS18 family. As to quaternary structure, part of the 30S ribosomal subunit.

It localises to the plastid. It is found in the chloroplast. This Lotus japonicus (Lotus corniculatus var. japonicus) protein is Small ribosomal subunit protein bS18c.